The sequence spans 215 residues: UPF0502 protein YceH (215 aa).

Position 80 is an N6-acetyllysine (K80).

It belongs to the UPF0502 family.

The chain is UPF0502 protein YceH from Escherichia coli O81 (strain ED1a).